The primary structure comprises 179 residues: ATP synthase subunit delta (179 aa).

The protein belongs to the ATPase delta chain family. As to quaternary structure, F-type ATPases have 2 components, F(1) - the catalytic core - and F(0) - the membrane proton channel. F(1) has five subunits: alpha(3), beta(3), gamma(1), delta(1), epsilon(1). F(0) has three main subunits: a(1), b(2) and c(10-14). The alpha and beta chains form an alternating ring which encloses part of the gamma chain. F(1) is attached to F(0) by a central stalk formed by the gamma and epsilon chains, while a peripheral stalk is formed by the delta and b chains.

It localises to the cell membrane. F(1)F(0) ATP synthase produces ATP from ADP in the presence of a proton or sodium gradient. F-type ATPases consist of two structural domains, F(1) containing the extramembraneous catalytic core and F(0) containing the membrane proton channel, linked together by a central stalk and a peripheral stalk. During catalysis, ATP synthesis in the catalytic domain of F(1) is coupled via a rotary mechanism of the central stalk subunits to proton translocation. Functionally, this protein is part of the stalk that links CF(0) to CF(1). It either transmits conformational changes from CF(0) to CF(1) or is implicated in proton conduction. This is ATP synthase subunit delta from Clostridium botulinum (strain Kyoto / Type A2).